Consider the following 287-residue polypeptide: Ribosomal RNA small subunit methyltransferase A (287 aa).

6 residues coordinate S-adenosyl-L-methionine: Asn-28, Leu-30, Gly-55, Glu-77, Asp-103, and Asn-123.

It belongs to the class I-like SAM-binding methyltransferase superfamily. rRNA adenine N(6)-methyltransferase family. RsmA subfamily.

It is found in the cytoplasm. The enzyme catalyses adenosine(1518)/adenosine(1519) in 16S rRNA + 4 S-adenosyl-L-methionine = N(6)-dimethyladenosine(1518)/N(6)-dimethyladenosine(1519) in 16S rRNA + 4 S-adenosyl-L-homocysteine + 4 H(+). In terms of biological role, specifically dimethylates two adjacent adenosines (A1518 and A1519) in the loop of a conserved hairpin near the 3'-end of 16S rRNA in the 30S particle. May play a critical role in biogenesis of 30S subunits. This chain is Ribosomal RNA small subunit methyltransferase A, found in Nitrobacter winogradskyi (strain ATCC 25391 / DSM 10237 / CIP 104748 / NCIMB 11846 / Nb-255).